The following is a 128-amino-acid chain: Hemoglobin subunit beta-1 (128 aa).

Residues 2-128 (HWTAEEKALV…VVDALSKGYH (127 aa)) enclose the Globin domain. His-51 and His-74 together coordinate heme b.

It belongs to the globin family. Hb 1 is a heterotetramer of two alpha and two beta-1 chains. In terms of tissue distribution, red blood cells (at protein level).

Involved in oxygen transport from gills to the various peripheral tissues. The polypeptide is Hemoglobin subunit beta-1 (Somniosus microcephalus (Greenland sleeper shark)).